A 372-amino-acid polypeptide reads, in one-letter code: Methenyltetrahydrofolate synthase domain-containing protein (372 aa).

Positions 246 to 258 (KQAGKDVTLRDEP) are enriched in basic and acidic residues. A disordered region spans residues 246–289 (KQAGKDVTLRDEPGSQQPAPGPIRRPQDRPQTGSRGGSRSPLQG). An RRM domain is found at 296–369 (ATVCVGNLPF…NALRVSLGQQ (74 aa)).

The polypeptide is Methenyltetrahydrofolate synthase domain-containing protein (Mthfsd) (Mus musculus (Mouse)).